The sequence spans 314 residues: 1-aminocyclopropane-1-carboxylate oxidase 1 (314 aa).

Residues 153 to 253 (PNFGTKVSNY…RMSIASFYNP (101 aa)) form the Fe2OG dioxygenase domain. Fe cation-binding residues include His-177, Asp-179, and His-234.

The protein belongs to the iron/ascorbate-dependent oxidoreductase family. As to quaternary structure, monomer. Requires Fe cation as cofactor.

The catalysed reaction is 1-aminocyclopropane-1-carboxylate + L-ascorbate + O2 = ethene + L-dehydroascorbate + hydrogen cyanide + CO2 + 2 H2O. It functions in the pathway alkene biosynthesis; ethylene biosynthesis via S-adenosyl-L-methionine; ethylene from S-adenosyl-L-methionine: step 2/2. This Malus domestica (Apple) protein is 1-aminocyclopropane-1-carboxylate oxidase 1.